We begin with the raw amino-acid sequence, 293 residues long: 4-diphosphocytidyl-2-C-methyl-D-erythritol kinase (293 aa).

Residue K16 is part of the active site. 99–109 (PMGAGLGGGSS) serves as a coordination point for ATP. The active site involves D141.

This sequence belongs to the GHMP kinase family. IspE subfamily.

The enzyme catalyses 4-CDP-2-C-methyl-D-erythritol + ATP = 4-CDP-2-C-methyl-D-erythritol 2-phosphate + ADP + H(+). Its pathway is isoprenoid biosynthesis; isopentenyl diphosphate biosynthesis via DXP pathway; isopentenyl diphosphate from 1-deoxy-D-xylulose 5-phosphate: step 3/6. Its function is as follows. Catalyzes the phosphorylation of the position 2 hydroxy group of 4-diphosphocytidyl-2C-methyl-D-erythritol. The protein is 4-diphosphocytidyl-2-C-methyl-D-erythritol kinase of Paraburkholderia phytofirmans (strain DSM 17436 / LMG 22146 / PsJN) (Burkholderia phytofirmans).